Reading from the N-terminus, the 354-residue chain is Photosystem II protein D1 (354 aa).

T2 is modified (N-acetylthreonine). The residue at position 2 (T2) is a Phosphothreonine. The next 3 membrane-spanning stretches (helical) occupy residues 29-46 (YIGW…TATS), 118-133 (HFLL…EWEL), and 142-156 (WIAV…AATA). Position 118 (H118) interacts with chlorophyll a. Y126 contributes to the pheophytin a binding site. [CaMn4O5] cluster contacts are provided by D170 and E189. Residues 197–218 (FHMLGVAGVFGGSLFSAMHGSL) traverse the membrane as a helical segment. H198 contacts chlorophyll a. A quinone contacts are provided by residues H215 and 264–265 (SF). H215 provides a ligand contact to Fe cation. H272 contributes to the Fe cation binding site. The helical transmembrane segment at 274–288 (FLAAWPVVGIWFTAL) threads the bilayer. [CaMn4O5] cluster-binding residues include H332, E333, D342, and A344. The propeptide occupies 345–354 (ASIEAPSLNG).

The protein belongs to the reaction center PufL/M/PsbA/D family. PSII is composed of 1 copy each of membrane proteins PsbA, PsbB, PsbC, PsbD, PsbE, PsbF, PsbH, PsbI, PsbJ, PsbK, PsbL, PsbM, PsbT, PsbX, PsbY, PsbZ, Psb30/Ycf12, at least 3 peripheral proteins of the oxygen-evolving complex and a large number of cofactors. It forms dimeric complexes. The D1/D2 heterodimer binds P680, chlorophylls that are the primary electron donor of PSII, and subsequent electron acceptors. It shares a non-heme iron and each subunit binds pheophytin, quinone, additional chlorophylls, carotenoids and lipids. D1 provides most of the ligands for the Mn4-Ca-O5 cluster of the oxygen-evolving complex (OEC). There is also a Cl(-1) ion associated with D1 and D2, which is required for oxygen evolution. The PSII complex binds additional chlorophylls, carotenoids and specific lipids. is required as a cofactor. Tyr-161 forms a radical intermediate that is referred to as redox-active TyrZ, YZ or Y-Z. Post-translationally, C-terminally processed by CTPA; processing is essential to allow assembly of the oxygen-evolving complex and thus photosynthetic growth.

The protein localises to the plastid. It is found in the chloroplast thylakoid membrane. It carries out the reaction 2 a plastoquinone + 4 hnu + 2 H2O = 2 a plastoquinol + O2. Functionally, photosystem II (PSII) is a light-driven water:plastoquinone oxidoreductase that uses light energy to abstract electrons from H(2)O, generating O(2) and a proton gradient subsequently used for ATP formation. It consists of a core antenna complex that captures photons, and an electron transfer chain that converts photonic excitation into a charge separation. The D1/D2 (PsbA/PsbD) reaction center heterodimer binds P680, the primary electron donor of PSII as well as several subsequent electron acceptors. The chain is Photosystem II protein D1 from Selaginella uncinata (Blue spike-moss).